A 150-amino-acid chain; its full sequence is 3-dehydroquinate dehydratase (150 aa).

Tyrosine 26 serves as the catalytic Proton acceptor. Asparagine 77, histidine 83, and aspartate 90 together coordinate substrate. Histidine 103 (proton donor) is an active-site residue. Substrate-binding positions include 104-105 (LS) and arginine 114.

The protein belongs to the type-II 3-dehydroquinase family. As to quaternary structure, homododecamer.

The catalysed reaction is 3-dehydroquinate = 3-dehydroshikimate + H2O. Its pathway is metabolic intermediate biosynthesis; chorismate biosynthesis; chorismate from D-erythrose 4-phosphate and phosphoenolpyruvate: step 3/7. In terms of biological role, catalyzes a trans-dehydration via an enolate intermediate. This is 3-dehydroquinate dehydratase from Erwinia tasmaniensis (strain DSM 17950 / CFBP 7177 / CIP 109463 / NCPPB 4357 / Et1/99).